Here is a 387-residue protein sequence, read N- to C-terminus: Chaperone protein DnaJ (387 aa).

Positions 6–71 (DYYEILGVPR…EKRRKYDQFG (66 aa)) constitute a J domain. Residues 146–228 (GCEKEIPIYR…CGGTGTVRRQ (83 aa)) form a CR-type zinc finger. Zn(2+) is bound by residues cysteine 159, cysteine 162, cysteine 176, cysteine 179, cysteine 202, cysteine 205, cysteine 216, and cysteine 219. CXXCXGXG motif repeat units lie at residues 159–166 (CSVCGGSG), 176–183 (CQKCGGTG), 202–209 (CDACGGVG), and 216–223 (CRECGGTG).

Belongs to the DnaJ family. Homodimer. The cofactor is Zn(2+).

Its subcellular location is the cytoplasm. Participates actively in the response to hyperosmotic and heat shock by preventing the aggregation of stress-denatured proteins and by disaggregating proteins, also in an autonomous, DnaK-independent fashion. Unfolded proteins bind initially to DnaJ; upon interaction with the DnaJ-bound protein, DnaK hydrolyzes its bound ATP, resulting in the formation of a stable complex. GrpE releases ADP from DnaK; ATP binding to DnaK triggers the release of the substrate protein, thus completing the reaction cycle. Several rounds of ATP-dependent interactions between DnaJ, DnaK and GrpE are required for fully efficient folding. Also involved, together with DnaK and GrpE, in the DNA replication of plasmids through activation of initiation proteins. The protein is Chaperone protein DnaJ of Caldicellulosiruptor saccharolyticus (strain ATCC 43494 / DSM 8903 / Tp8T 6331).